We begin with the raw amino-acid sequence, 644 residues long: ATP-dependent zinc metalloprotease FtsH (644 aa).

Residues 1 to 4 (MAKN) lie on the Cytoplasmic side of the membrane. Residues 5–25 (LILWLVIAVVLMSVFQSFGPS) traverse the membrane as a helical segment. Residues 26–98 (ESNGRKVDYS…VGEPPEEPSL (73 aa)) lie on the Periplasmic side of the membrane. Residues 99–119 (LASIFISWFPMLLLIGVWIFF) traverse the membrane as a helical segment. The Cytoplasmic portion of the chain corresponds to 120–644 (MRQMQGGGGK…NTMSEQLGDK (525 aa)). 192–199 (GPPGTGKT) contributes to the ATP binding site. Histidine 414 contributes to the Zn(2+) binding site. The active site involves glutamate 415. Positions 418 and 492 each coordinate Zn(2+). The tract at residues 598–644 (VRPPAGWEEPGASNNAGDNGSPKAPRPVDEPRTPNPGNTMSEQLGDK) is disordered. Positions 632–644 (NPGNTMSEQLGDK) are enriched in polar residues.

It in the central section; belongs to the AAA ATPase family. In the C-terminal section; belongs to the peptidase M41 family. As to quaternary structure, homohexamer. The cofactor is Zn(2+).

The protein resides in the cell inner membrane. Functionally, acts as a processive, ATP-dependent zinc metallopeptidase for both cytoplasmic and membrane proteins. Plays a role in the quality control of integral membrane proteins. This is ATP-dependent zinc metalloprotease FtsH from Escherichia coli O157:H7.